Reading from the N-terminus, the 246-residue chain is Ribonuclease 3 (246 aa).

Residues 18-147 enclose the RNase III domain; that stretch reads FQELQNKIGI…FIGALYLDQG (130 aa). Glu-60 is a binding site for Mg(2+). Asp-64 is a catalytic residue. Residues Asp-133 and Glu-136 each coordinate Mg(2+). Glu-136 is a catalytic residue. The 70-residue stretch at 173–242 folds into the DRBM domain; sequence DFKSQLQELV…AQMALETLRA (70 aa).

Belongs to the ribonuclease III family. As to quaternary structure, homodimer. The cofactor is Mg(2+).

The protein localises to the cytoplasm. It carries out the reaction Endonucleolytic cleavage to 5'-phosphomonoester.. Its function is as follows. Digests double-stranded RNA. Involved in the processing of primary rRNA transcript to yield the immediate precursors to the large and small rRNAs (23S and 16S). Processes some mRNAs, and tRNAs when they are encoded in the rRNA operon. Processes pre-crRNA and tracrRNA of type II CRISPR loci if present in the organism. This chain is Ribonuclease 3, found in Geobacillus kaustophilus (strain HTA426).